Here is a 93-residue protein sequence, read N- to C-terminus: MAQEEKERIVIPDENGDEHLFDELFKFTVDETGKSYILLTPVGEEEGEEEEAEVFAFRFEDREGEENDIALFPIETDEEWDMVEEMLNTFSEE.

It belongs to the UPF0473 family.

This Halalkalibacterium halodurans (strain ATCC BAA-125 / DSM 18197 / FERM 7344 / JCM 9153 / C-125) (Bacillus halodurans) protein is UPF0473 protein BH1270.